The following is a 249-amino-acid chain: 1-(5-phosphoribosyl)-5-[(5-phosphoribosylamino)methylideneamino] imidazole-4-carboxamide isomerase (249 aa).

Asp-11 acts as the Proton acceptor in catalysis. Asp-132 (proton donor) is an active-site residue.

This sequence belongs to the HisA/HisF family.

The protein resides in the cytoplasm. The catalysed reaction is 1-(5-phospho-beta-D-ribosyl)-5-[(5-phospho-beta-D-ribosylamino)methylideneamino]imidazole-4-carboxamide = 5-[(5-phospho-1-deoxy-D-ribulos-1-ylimino)methylamino]-1-(5-phospho-beta-D-ribosyl)imidazole-4-carboxamide. It participates in amino-acid biosynthesis; L-histidine biosynthesis; L-histidine from 5-phospho-alpha-D-ribose 1-diphosphate: step 4/9. This chain is 1-(5-phosphoribosyl)-5-[(5-phosphoribosylamino)methylideneamino] imidazole-4-carboxamide isomerase, found in Nitrobacter winogradskyi (strain ATCC 25391 / DSM 10237 / CIP 104748 / NCIMB 11846 / Nb-255).